A 507-amino-acid polypeptide reads, in one-letter code: MTLSIQSLASIAIELQSGLTQRDRFQRLINSLRSLLRCDASALLRFEGQQFRPLAIDGLAQDVLGRRFALDAHPRLEAIARAGGVVRFPADSELPDPYDGLIPGHDQLKVHACIGLPLFAEQDLIGALTFDSLDPMQFDRFSDEELRLISALAAGALNNALLVEALERQALSPLASPGGSSPRENDEIIGLSSVMQQLKQEISIVAGSELNVLITGETGVGKELVVRAIHQGSARAANPLVYLNCAALPESVAESELFGHVKGAFTGAIQHRAGKFEMADNGTLFLDEIGELSLSLQAKLLRVIQYGDLQRVGDDRVKRVNVRILAATNRDLKQAAVDGAFRLDLYHRLSVFPLAVPPLRERVSDIALLAGYFCERCRIKLGLMQLTLSVQALSALEQYSWPGNIRELEHSIYRAAILARAEQSSSELQLLPAHFTIKAGALPARIIDDALPESAIGVSLATLTQHFQRSVIEKTLVECEMNWAATARKLELDSGNLHRLAKRLNMK.

Aspartate 57 carries the 4-aspartylphosphate modification. In terms of domain architecture, Sigma-54 factor interaction spans 188 to 417 (IIGLSSVMQQ…LEHSIYRAAI (230 aa)). ATP is bound by residues 216–223 (GETGVGKE) and 279–288 (ADNGTLFLDE). A DNA-binding region (H-T-H motif) is located at residues 483 to 502 (WAATARKLELDSGNLHRLAK).

It functions in the pathway nitrogen metabolism; nitric oxide reduction. Its function is as follows. Required for the expression of anaerobic nitric oxide (NO) reductase, acts as a transcriptional activator for at least the norVW operon. Activation also requires sigma-54. This Serratia proteamaculans (strain 568) protein is Anaerobic nitric oxide reductase transcription regulator NorR.